A 283-amino-acid chain; its full sequence is Bifunctional protein FolD (283 aa).

NADP(+)-binding positions include 166-168 (GRS), S191, and T232.

Belongs to the tetrahydrofolate dehydrogenase/cyclohydrolase family. In terms of assembly, homodimer.

The enzyme catalyses (6R)-5,10-methylene-5,6,7,8-tetrahydrofolate + NADP(+) = (6R)-5,10-methenyltetrahydrofolate + NADPH. It carries out the reaction (6R)-5,10-methenyltetrahydrofolate + H2O = (6R)-10-formyltetrahydrofolate + H(+). The protein operates within one-carbon metabolism; tetrahydrofolate interconversion. Its function is as follows. Catalyzes the oxidation of 5,10-methylenetetrahydrofolate to 5,10-methenyltetrahydrofolate and then the hydrolysis of 5,10-methenyltetrahydrofolate to 10-formyltetrahydrofolate. In Halothermothrix orenii (strain H 168 / OCM 544 / DSM 9562), this protein is Bifunctional protein FolD.